The sequence spans 149 residues: Arginine repressor (149 aa).

This sequence belongs to the ArgR family.

It localises to the cytoplasm. It participates in amino-acid biosynthesis; L-arginine biosynthesis [regulation]. In terms of biological role, regulates arginine biosynthesis genes. This chain is Arginine repressor, found in Chlorobium phaeobacteroides (strain DSM 266 / SMG 266 / 2430).